Here is an 84-residue protein sequence, read N- to C-terminus: MEQTKIDRINELARKKKTEGLTGAEKLEQERLREEYIEGYRRSIRHHIEGLKIVDEEGNDITPAKLKEIQRQKGIHGRKPEDNS.

Positions 57–84 (EGNDITPAKLKEIQRQKGIHGRKPEDNS) are disordered.

This sequence belongs to the UPF0291 family.

The protein resides in the cytoplasm. This Streptococcus mutans serotype c (strain ATCC 700610 / UA159) protein is UPF0291 protein SMU_447.